A 1428-amino-acid polypeptide reads, in one-letter code: uncharacterized protein (1428 aa).

3 disordered regions span residues 1 to 53 (MAKK…AFKV), 249 to 274 (DIKHTPNKETQPSNQVDDSLKSKDSK), and 377 to 413 (KNGIQEDSQSTDDSSKDDDNNSESNDMSPHNDAETRA). The segment covering 16–33 (ATTSIPSRSASSPANKNQ) has biased composition (polar residues). The segment covering 34-51 (VKGEKNNKTQKVEPKNAF) has biased composition (basic and acidic residues). Positions 256–265 (KETQPSNQVD) are enriched in polar residues. Residues 641-811 (IDAVNNSQLL…FEGSNLITIP (171 aa)) form the Helicase ATP-binding domain. 654–661 (GDTGCGKS) is a binding site for ATP. Positions 758-761 (DEVH) match the DEAH box motif. Residues 886 to 1064 (LIVYLLKYIF…EVVLRVKMCQ (179 aa)) form the Helicase C-terminal domain.

This sequence belongs to the helicase family. SKI2 subfamily.

The protein localises to the cytoplasm. This is an uncharacterized protein from Schizosaccharomyces pombe (strain 972 / ATCC 24843) (Fission yeast).